The following is a 653-amino-acid chain: MASTNSQDMVCGSVTFRDVAVDFSQEEWACLDATQKVLYRNIMLETYSNLVAVVGSCISKPDLIVLLEQEKEPWMAVNEETGRPSPDLEADYDAENISPQNRIYNRKFSKQSIKQLSRTFDPKGSWFSNGPNYSTFHGLRDCQSDAGQQITNKEGVPPHTCQTLAHNTEKPYECKECGKCFGCRSTLTQHQSVHTGEKPYECKECGKAFRLPQQLTRHQKCHSGEKPFSHNEGRQAFQHPNLLKYPKAIHTGAKAFACRECGKSFNRVSSLVEHGLIHADVKPYECNECGKAFKRHRSFVRHQKIHSGERPFQCKDCGKGFIVLAHLTRHQSSHSEEKPFECEECGKKFRTARHLVKHQRIHSGEKPFECNVCGSAFRLQLYLSEHQKTHMEEKYLECNVCGKAFRLQVYLSEHLKTHTEENPFKCKLCGSAFPNKYQLNKHLTVHTDGKPYQCKECGKCFRQRSKLTEHESIHTGKKPFQCEECGKFFRLNTLLIHHQKSHSGERPFECKECGKAFLLPSQLNSHKIVHTSKRPFECKVCGKSFKRESNLIQHGAVHAGVKSYECSECGKGFIHRSSLFHHRKIHSDEKPFKCQECGKAFVVLAYLIQHQSIHTGEKPFECELCGSAFRCRSQLNKHLRIHTDVKLFQCVED.

The KRAB domain occupies 14 to 86 (VTFRDVAVDF…VNEETGRPSP (73 aa)). 16 C2H2-type zinc fingers span residues 172–194 (YECK…QSVH), 200–222 (YECK…QKCH), 256–278 (FACR…GLIH), 284–306 (YECN…QKIH), 312–334 (FQCK…QSSH), 340–362 (FECE…QRIH), 368–390 (FECN…QKTH), 396–418 (LECN…LKTH), 424–446 (FKCK…LTVH), 452–474 (YQCK…ESIH), 480–502 (FQCE…QKSH), 508–530 (FECK…KIVH), 536–558 (FECK…GAVH), 564–586 (YECS…RKIH), 592–614 (FKCQ…QSIH), and 620–642 (FECE…LRIH).

This sequence belongs to the krueppel C2H2-type zinc-finger protein family. As to expression, expressed predominantly in the testis (at protein level).

The protein resides in the nucleus. May have a role during differentiation processes. This is Zinc finger protein 59 (Zfp59) from Mus musculus (Mouse).